Consider the following 702-residue polypeptide: Vacuolar protein sorting-associated protein 52 homolog (702 aa).

Residues 505–535 (KEMGAKMEAVLENSEDSIEQLLTRMSAMQQT) adopt a coiled-coil conformation.

Belongs to the VPS52 family. In terms of assembly, component of the Golgi-associated retrograde protein (GARP) complex, also called VFT (VPS fifty-three) complex, composed of vps-51, vps-52, vps-53 and vps-54. Within the complex interacts with vps-53 and vps-54. Interacts with the small GTPases rab-6.1 and rab-6.2. In terms of tissue distribution, ubiquitously expressed, with particularly strong expression in neuronal cells. Specifically expressed in head and tail neurons and in the pharynx and ventral cord motor neurons.

Its subcellular location is the golgi apparatus. The protein localises to the trans-Golgi network. It is found in the perikaryon. It localises to the cytoplasm. The protein resides in the perinuclear region. Functionally, acts as a component of the GARP complex that is involved in retrograde transport from early and late endosomes to the trans-Golgi network (TGN). The GARP complex facilitates tethering as well as SNARE complex assembly at the Golgi. Plays a role in the trafficking of cargo to dense-core vesicles, probably through association with the EARP-interacting protein eipr-1. Important for neuronal function. The polypeptide is Vacuolar protein sorting-associated protein 52 homolog (Caenorhabditis elegans).